Consider the following 475-residue polypeptide: L-seryl-tRNA(Sec) selenium transferase (475 aa).

An N6-(pyridoxal phosphate)lysine modification is found at Lys295.

The protein belongs to the SelA family. The cofactor is pyridoxal 5'-phosphate.

Its subcellular location is the cytoplasm. The enzyme catalyses L-seryl-tRNA(Sec) + selenophosphate + H(+) = L-selenocysteinyl-tRNA(Sec) + phosphate. It functions in the pathway aminoacyl-tRNA biosynthesis; selenocysteinyl-tRNA(Sec) biosynthesis; selenocysteinyl-tRNA(Sec) from L-seryl-tRNA(Sec) (bacterial route): step 1/1. Converts seryl-tRNA(Sec) to selenocysteinyl-tRNA(Sec) required for selenoprotein biosynthesis. The sequence is that of L-seryl-tRNA(Sec) selenium transferase from Desulfovibrio desulfuricans (strain ATCC 27774 / DSM 6949 / MB).